Here is a 64-residue protein sequence, read N- to C-terminus: MCCLPVFVILLLLIASAPSVDALPKTKDDMSLASFHDNAKRTLQILSNKRYCCVYDYSCCLSWG.

A signal peptide spans Met1 to Ala22. Residues Leu23–Asn48 constitute a propeptide that is removed on maturation. Trp63 is modified (tryptophan amide).

The protein belongs to the conotoxin T superfamily. Post-translationally, contains 2 disulfide bonds that can be either 'C1-C3, C2-C4' or 'C1-C4, C2-C3', since these disulfide connectivities have been observed for conotoxins with cysteine framework V (for examples, see AC P0DQQ7 and AC P81755). Expressed by the venom duct.

The protein localises to the secreted. The chain is Conotoxin Pn-B01121 from Conus pennaceus (Feathered cone).